The chain runs to 264 residues: Thymidylate synthase (264 aa).

Residue arginine 21 participates in dUMP binding. Histidine 51 provides a ligand contact to (6R)-5,10-methylene-5,6,7,8-tetrahydrofolate. 126–127 (RR) serves as a coordination point for dUMP. The active-site Nucleophile is the cysteine 146. Residues 166 to 169 (RSAD), asparagine 177, and 207 to 209 (HLY) each bind dUMP. Aspartate 169 provides a ligand contact to (6R)-5,10-methylene-5,6,7,8-tetrahydrofolate. Residue alanine 263 participates in (6R)-5,10-methylene-5,6,7,8-tetrahydrofolate binding.

The protein belongs to the thymidylate synthase family. Bacterial-type ThyA subfamily. In terms of assembly, homodimer.

The protein localises to the cytoplasm. It carries out the reaction dUMP + (6R)-5,10-methylene-5,6,7,8-tetrahydrofolate = 7,8-dihydrofolate + dTMP. The protein operates within pyrimidine metabolism; dTTP biosynthesis. In terms of biological role, catalyzes the reductive methylation of 2'-deoxyuridine-5'-monophosphate (dUMP) to 2'-deoxythymidine-5'-monophosphate (dTMP) while utilizing 5,10-methylenetetrahydrofolate (mTHF) as the methyl donor and reductant in the reaction, yielding dihydrofolate (DHF) as a by-product. This enzymatic reaction provides an intracellular de novo source of dTMP, an essential precursor for DNA biosynthesis. The sequence is that of Thymidylate synthase from Alkalilimnicola ehrlichii (strain ATCC BAA-1101 / DSM 17681 / MLHE-1).